Here is a 415-residue protein sequence, read N- to C-terminus: Multidrug resistance protein MdtA (415 aa).

Positions 1–21 (MKGSYKSRWVIVIVVVIAAIA) are cleaved as a signal peptide. Disordered regions lie at residues 32-59 (SRSA…SGPL) and 392-415 (EAQS…GARS). Residues 399–415 (SEEKATSREYAKKGARS) show a composition bias toward basic and acidic residues.

It belongs to the membrane fusion protein (MFP) (TC 8.A.1) family. Part of a tripartite efflux system composed of MdtA, MdtB and MdtC.

The protein resides in the cell inner membrane. The MdtABC tripartite complex confers resistance against novobiocin and deoxycholate. The protein is Multidrug resistance protein MdtA of Escherichia coli (strain SMS-3-5 / SECEC).